Here is a 1538-residue protein sequence, read N- to C-terminus: Myosin-9 (1538 aa).

One can recognise a Myosin N-terminal SH3-like domain in the interval 16 to 65 (SIGSHVWFEDPEVAWIDGEVEKINGQEVVIQATTGKKVTAKLSKIYPKDV). Positions 70–740 (GGVDDMTKLS…QMAELDARRA (671 aa)) constitute a Myosin motor domain. ATP is bound by residues 164–171 (GESGAGKT) and 217–225 (NNNSSRFGK). 4 actin-binding regions span residues 503 to 537 (LIEKKPGGIVALLDEACMFPKSTHETFANKLYQTF), 539 to 562 (THKRFIKPKLSRTDFAVAHYAGEV), 597 to 621 (FPPLPEETSKSSKFSSIGSRFKLQL), and 621 to 643 (LQQLMETLNCTEPHYIRCVKPNN). IQ domains are found at residues 743-772 (LSSAAKKIQRRIRTHQAQKRFIVLRKATIS), 766-795 (LRKATISLQAICRGRLSCKHYDNLRREAAA), 791-820 (REAAAVKIQKNGRRHYSRKSYKKLHVASLV), 814-843 (LHVASLVVQTGLRAMAARKQFRFRKQTKAA), 839-868 (QTKAATIVQAQWRCHRAISYYKKLKNGVVL), and 862-891 (LKNGVVLSQTRWRGRLAKRELRKLKMAARE). Residues 892–1064 (TGALKEAKDM…VLRQQAVSMA (173 aa)) are a coiled coil. Positions 1017–1032 (SLEDKKKKLEETEKKG) are enriched in basic and acidic residues. Disordered regions lie at residues 1017–1041 (SLEDKKKKLEETEKKGQQLQESLTR) and 1098–1121 (SHSINHRDPSEVEDKPQKSLNEKQ). The Dilute domain occupies 1168 to 1481 (DRIIQTIGHA…IANMRVLMTE (314 aa)).

It belongs to the TRAFAC class myosin-kinesin ATPase superfamily. Myosin family. Plant myosin class XI subfamily. Homodimer.

In terms of biological role, myosin heavy chain that is required for the cell cycle-regulated transport of various organelles and proteins for their segregation. Functions by binding with its tail domain to receptor proteins on organelles and exerting force with its N-terminal motor domain against actin filaments, thereby transporting its cargo along polarized actin cables. Involved in trafficking of Golgi stacks and mitochondria. The chain is Myosin-9 (XI-C) from Arabidopsis thaliana (Mouse-ear cress).